The sequence spans 197 residues: Small ribosomal subunit protein uS4 (197 aa).

In terms of domain architecture, S4 RNA-binding spans 87 to 147; it reads LRLDNVLFRL…EKSKSSARYK (61 aa).

It belongs to the universal ribosomal protein uS4 family. As to quaternary structure, part of the 30S ribosomal subunit. Contacts protein S5. The interaction surface between S4 and S5 is involved in control of translational fidelity.

In terms of biological role, one of the primary rRNA binding proteins, it binds directly to 16S rRNA where it nucleates assembly of the body of the 30S subunit. Its function is as follows. With S5 and S12 plays an important role in translational accuracy. This chain is Small ribosomal subunit protein uS4, found in Lachnospira eligens (strain ATCC 27750 / DSM 3376 / VPI C15-48 / C15-B4) (Eubacterium eligens).